A 252-amino-acid chain; its full sequence is Anamorsin homolog (252 aa).

Residues 1–153 (MINFSNTLII…AENPDFNKSD (153 aa)) are N-terminal SAM-like domain. Positions 153 to 166 (DDDNNLVSSDEEIY) are linker. [2Fe-2S] cluster is bound by residues C169, C180, C183, and C185. The tract at residues 169–185 (CEDKKKVVNRVCDNCTC) is fe-S binding site A. The [4Fe-4S] cluster site is built by C215, C218, C226, and C229. 2 short sequence motifs (cx2C motif) span residues 215-218 (CGNC) and 226-229 (CGSC). Residues 215-229 (CGNCYLGDAFRCGSC) are fe-S binding site B.

It belongs to the anamorsin family. In terms of assembly, monomer. The cofactor is [2Fe-2S] cluster. Requires [4Fe-4S] cluster as cofactor.

The protein localises to the cytoplasm. Its subcellular location is the mitochondrion intermembrane space. Component of the cytosolic iron-sulfur (Fe-S) protein assembly (CIA) machinery. Required for the maturation of extramitochondrial Fe-S proteins. Part of an electron transfer chain functioning in an early step of cytosolic Fe-S biogenesis, facilitating the de novo assembly of a [4Fe-4S] cluster on the cytosolic Fe-S scaffold complex. Electrons are transferred from NADPH via a FAD- and FMN-containing diflavin oxidoreductase. Together with the diflavin oxidoreductase, also required for the assembly of the diferric tyrosyl radical cofactor of ribonucleotide reductase (RNR), probably by providing electrons for reduction during radical cofactor maturation in the catalytic small subunit. This Plasmodium berghei (strain Anka) protein is Anamorsin homolog (DRE2).